The primary structure comprises 211 residues: Mitotic spindle assembly checkpoint protein MAD2B (211 aa).

The HORMA domain maps to 13–203 (QVVADILCEF…SDILKMQLYV (191 aa)).

As to quaternary structure, homooligomer. Interacts with rev1. Interacts with rev3l. Interacts with fzr1 (in complex with the anaphase promoting complex APC). May interact with cdc20.

The protein resides in the nucleus. It localises to the cytoplasm. The protein localises to the cytoskeleton. It is found in the spindle. Its function is as follows. Adapter protein able to interact with different proteins and involved in different biological processes. Mediates the interaction between the error-prone DNA polymerase zeta catalytic subunit rev3l and the inserter polymerase rev1, thereby mediating the second polymerase switching in translesion DNA synthesis. Translesion DNA synthesis releases the replication blockade of replicative polymerases, stalled in presence of DNA lesions. May also play a role in signal transduction in response to DNA damage. May regulate the activation of the anaphase promoting complex APC thereby regulating progression through the cell cycle. Through transcriptional regulation may play a role in epithelial-mesenchymal transdifferentiation. The sequence is that of Mitotic spindle assembly checkpoint protein MAD2B (mad2l2) from Xenopus tropicalis (Western clawed frog).